Here is a 684-residue protein sequence, read N- to C-terminus: Glycine--tRNA ligase beta subunit (684 aa).

The protein belongs to the class-II aminoacyl-tRNA synthetase family. As to quaternary structure, tetramer of two alpha and two beta subunits.

Its subcellular location is the cytoplasm. It carries out the reaction tRNA(Gly) + glycine + ATP = glycyl-tRNA(Gly) + AMP + diphosphate. In Pseudomonas fluorescens (strain SBW25), this protein is Glycine--tRNA ligase beta subunit.